Reading from the N-terminus, the 308-residue chain is MLTVQELVDDNADKIPFSWIAGHDAADRAIPDDGMAAADLVGHLNLIHPSRIQVFGQEELAYYTRFDLRRRMHHMDELLIGGVPAILLADGLTPPQDLIDQCAQHQVPLLSTPVAAAQLIDLLRIYLGKKLAPTTTVHGVFLDVLGLGVLITGESGLGKSELALELISRGHGLVADDAVELSRTAPGVIEGHCPQLLQNLLEVRGLGLLDIRTIFGETSVRRKMRLKLIVHLVRATAQDKFERLPLQDITQDMLGLPIRKVMLQVAAGRNLAVLVEAAVRNTILKLRGIDTLGEFMERQAMAILQSSK.

Catalysis depends on residues His-138 and Lys-159. 153–160 (GESGLGKS) contacts ATP. Residue Ser-160 participates in Mg(2+) binding. Asp-177 acts as the Proton acceptor; for phosphorylation activity. Proton donor; for dephosphorylation activity in catalysis. Positions 201-210 (LEVRGLGLLD) are important for the catalytic mechanism of both phosphorylation and dephosphorylation. Residue Glu-202 coordinates Mg(2+). The active site involves Arg-243. An important for the catalytic mechanism of dephosphorylation region spans residues 264–269 (QVAAGR).

This sequence belongs to the HPrK/P family. As to quaternary structure, homohexamer. Requires Mg(2+) as cofactor.

The enzyme catalyses [HPr protein]-L-serine + ATP = [HPr protein]-O-phospho-L-serine + ADP + H(+). It catalyses the reaction [HPr protein]-O-phospho-L-serine + phosphate + H(+) = [HPr protein]-L-serine + diphosphate. In terms of biological role, catalyzes the ATP- as well as the pyrophosphate-dependent phosphorylation of a specific serine residue in HPr, a phosphocarrier protein of the phosphoenolpyruvate-dependent sugar phosphotransferase system (PTS). HprK/P also catalyzes the pyrophosphate-producing, inorganic phosphate-dependent dephosphorylation (phosphorolysis) of seryl-phosphorylated HPr (P-Ser-HPr). The chain is HPr kinase/phosphorylase from Bordetella bronchiseptica (strain ATCC BAA-588 / NCTC 13252 / RB50) (Alcaligenes bronchisepticus).